Here is a 115-residue protein sequence, read N- to C-terminus: Large ribosomal subunit protein bL19 (115 aa).

It belongs to the bacterial ribosomal protein bL19 family.

Its function is as follows. This protein is located at the 30S-50S ribosomal subunit interface and may play a role in the structure and function of the aminoacyl-tRNA binding site. The chain is Large ribosomal subunit protein bL19 from Streptococcus pyogenes serotype M49 (strain NZ131).